The primary structure comprises 234 residues: Urease accessory protein UreF (234 aa).

The protein belongs to the UreF family. UreD, UreF and UreG form a complex that acts as a GTP-hydrolysis-dependent molecular chaperone, activating the urease apoprotein by helping to assemble the nickel containing metallocenter of UreC. The UreE protein probably delivers the nickel.

Its subcellular location is the cytoplasm. Functionally, required for maturation of urease via the functional incorporation of the urease nickel metallocenter. This Kocuria rhizophila (strain ATCC 9341 / DSM 348 / NBRC 103217 / DC2201) protein is Urease accessory protein UreF.